Reading from the N-terminus, the 257-residue chain is Pimeloyl-[acyl-carrier protein] methyl ester esterase (257 aa).

The AB hydrolase-1 domain maps to His-15 to His-241. Residues Trp-22, Ser-82–Leu-83, and Phe-143–Gln-147 contribute to the substrate site. Ser-82 serves as the catalytic Nucleophile. Catalysis depends on residues Asp-207 and His-235. His-235 is a binding site for substrate.

It belongs to the AB hydrolase superfamily. Carboxylesterase BioH family. As to quaternary structure, monomer.

It is found in the cytoplasm. The enzyme catalyses 6-carboxyhexanoyl-[ACP] methyl ester + H2O = 6-carboxyhexanoyl-[ACP] + methanol + H(+). It participates in cofactor biosynthesis; biotin biosynthesis. Its function is as follows. The physiological role of BioH is to remove the methyl group introduced by BioC when the pimeloyl moiety is complete. It allows to synthesize pimeloyl-ACP via the fatty acid synthetic pathway through the hydrolysis of the ester bonds of pimeloyl-ACP esters. The polypeptide is Pimeloyl-[acyl-carrier protein] methyl ester esterase (Klebsiella pneumoniae subsp. pneumoniae (strain ATCC 700721 / MGH 78578)).